A 215-amino-acid chain; its full sequence is Calmodulin-like protein 5 (215 aa).

The segment at 38–61 (KNSPPSPSTMLPSPSSSSAPTKRI) is disordered. The segment covering 45 to 57 (STMLPSPSSSSAP) has biased composition (low complexity). 4 EF-hand domains span residues 61–96 (IDPSELKRVFQMFDKNGDGRITKEELNDSLENLGIY), 97–132 (IPDKDLTQMIHKIDANGDGCVDIDEFESLYSSIVDE), 139–174 (TEEEDMKDAFNVFDQDGDGFITVEELKSVMASLGLK), and 177–212 (KTLDGCKKMIMQVDADGDGRVNYKEFLQMMKGGGFS). Ca(2+) is bound by residues Asp-74, Asn-76, Asp-78, Arg-80, Glu-85, Asp-110, Asn-112, Asp-114, Cys-116, Glu-121, Asp-152, Asp-154, Asp-156, Glu-163, Asp-190, Asp-192, Asp-194, Arg-196, and Glu-201.

The protein belongs to the calmodulin family.

Its function is as follows. Potential calcium sensor. This Arabidopsis thaliana (Mouse-ear cress) protein is Calmodulin-like protein 5 (CML5).